A 393-amino-acid polypeptide reads, in one-letter code: Acyl-homoserine-lactone synthase OpaM (393 aa).

Belongs to the LuxM / VanM family.

It catalyses the reaction a fatty acyl-[ACP] + S-adenosyl-L-methionine = an N-acyl-L-homoserine lactone + S-methyl-5'-thioadenosine + holo-[ACP] + H(+). The sequence is that of Acyl-homoserine-lactone synthase OpaM (opaM) from Vibrio parahaemolyticus serotype O3:K6 (strain RIMD 2210633).